A 454-amino-acid chain; its full sequence is Sensor histidine kinase YkoH (454 aa).

Residues 1–12 (MKLKTKIHLYTS) are Cytoplasmic-facing. Residues 13–33 (ISLLILLILVHTAVYLIFSSA) traverse the membrane as a helical segment. Over 34-153 (LTSKDAARLA…NTEESLFLLK (120 aa)) the chain is Extracellular. The chain crosses the membrane as a helical span at residues 154-174 (IILIAASAAVCIASFFAGSLL). Residues 175 to 454 (ARRIINPIRR…QFSEQNGGGR (280 aa)) lie on the Cytoplasmic side of the membrane. Residues 176 to 230 (RRIINPIRRLMITMKDIQRDKEFKTISLEGQSNDELYQMGLTFNEMAMMLKEHYD) form the HAMP domain. The 213-residue stretch at 238–450 (DASHELKTPL…AVTMQFSEQN (213 aa)) folds into the Histidine kinase domain. His-241 bears the Phosphohistidine; by autocatalysis mark.

The protein localises to the cell membrane. It catalyses the reaction ATP + protein L-histidine = ADP + protein N-phospho-L-histidine.. Functionally, probable member of the two-component regulatory system YkoH/YkoG. Potentially phosphorylates YkoG. The polypeptide is Sensor histidine kinase YkoH (ykoH) (Bacillus subtilis (strain 168)).